The sequence spans 154 residues: Snaclec dabocetin subunit alpha (154 aa).

Positions 1–23 are cleaved as a signal peptide; the sequence is MGRFISVSFGLLVVFLSLSGTGA. 3 disulfide bridges follow: Cys25–Cys36, Cys53–Cys148, and Cys123–Cys140. A C-type lectin domain is found at 32 to 149; that stretch reads HEGHCYKVFK…CGDKNPFICK (118 aa).

This sequence belongs to the snaclec family. As to quaternary structure, heterodimer of subunits alpha and beta; disulfide-linked. In terms of tissue distribution, expressed by the venom gland.

The protein localises to the secreted. Functionally, inhibits ristocetin-induced platelet aggregation via binding to platelet glycoprotein Ibalpha (GP1BA). The polypeptide is Snaclec dabocetin subunit alpha (Daboia siamensis (Eastern Russel's viper)).